A 338-amino-acid chain; its full sequence is Secretion system apparatus protein SsaL (338 aa).

This chain is Secretion system apparatus protein SsaL (ssaL), found in Salmonella typhimurium (strain LT2 / SGSC1412 / ATCC 700720).